We begin with the raw amino-acid sequence, 111 residues long: Large ribosomal subunit protein uL22 (111 aa).

Belongs to the universal ribosomal protein uL22 family. As to quaternary structure, part of the 50S ribosomal subunit.

This protein binds specifically to 23S rRNA; its binding is stimulated by other ribosomal proteins, e.g. L4, L17, and L20. It is important during the early stages of 50S assembly. It makes multiple contacts with different domains of the 23S rRNA in the assembled 50S subunit and ribosome. Functionally, the globular domain of the protein is located near the polypeptide exit tunnel on the outside of the subunit, while an extended beta-hairpin is found that lines the wall of the exit tunnel in the center of the 70S ribosome. The chain is Large ribosomal subunit protein uL22 from Clostridium beijerinckii (strain ATCC 51743 / NCIMB 8052) (Clostridium acetobutylicum).